The following is a 649-amino-acid chain: Echinoderm microtubule-associated protein-like 2 (649 aa).

The tract at residues Lys-10–Ala-649 is tandem atypical propeller in EMLs. WD repeat units lie at residues Lys-56–Val-93, Arg-97–Ser-144, His-151–Trp-192, Glu-195–Leu-234, Lys-241–Lys-280, Ile-285–Ser-323, Phe-369–Ser-406, Gln-410–Thr-447, Leu-452–Val-489, Lys-495–Ala-535, Phe-564–Tyr-602, and Ala-609–Val-648.

The protein belongs to the WD repeat EMAP family. In terms of assembly, interacts with GRID2 and may also interact with GRID1. Interacts with EML3. Binds unpolymerized tubulins via its WD repeat region. As to expression, widely expressed in both brain and peripheral tissues, including brainstem and enrichment in the postsynaptic density, PSD.

It is found in the cytoplasm. The protein resides in the cytoskeleton. The protein localises to the spindle. Tubulin binding protein that inhibits microtubule nucleation and growth, resulting in shorter microtubules. This is Echinoderm microtubule-associated protein-like 2 (Eml2) from Rattus norvegicus (Rat).